We begin with the raw amino-acid sequence, 413 residues long: Imidazolonepropionase (413 aa).

The Fe(3+) site is built by His77 and His79. Residues His77 and His79 each coordinate Zn(2+). 4-imidazolone-5-propanoate is bound by residues Arg86, Tyr149, and His182. Tyr149 lines the N-formimidoyl-L-glutamate pocket. His247 provides a ligand contact to Fe(3+). His247 is a binding site for Zn(2+). 4-imidazolone-5-propanoate is bound at residue Gln250. Residue Asp322 participates in Fe(3+) binding. Residue Asp322 participates in Zn(2+) binding. 2 residues coordinate N-formimidoyl-L-glutamate: Asn324 and Gly326. Thr327 is a binding site for 4-imidazolone-5-propanoate.

Belongs to the metallo-dependent hydrolases superfamily. HutI family. Zn(2+) is required as a cofactor. Fe(3+) serves as cofactor.

It is found in the cytoplasm. The enzyme catalyses 4-imidazolone-5-propanoate + H2O = N-formimidoyl-L-glutamate. The protein operates within amino-acid degradation; L-histidine degradation into L-glutamate; N-formimidoyl-L-glutamate from L-histidine: step 3/3. Its function is as follows. Catalyzes the hydrolytic cleavage of the carbon-nitrogen bond in imidazolone-5-propanoate to yield N-formimidoyl-L-glutamate. It is the third step in the universal histidine degradation pathway. This Chromobacterium violaceum (strain ATCC 12472 / DSM 30191 / JCM 1249 / CCUG 213 / NBRC 12614 / NCIMB 9131 / NCTC 9757 / MK) protein is Imidazolonepropionase.